The sequence spans 314 residues: TPR repeat-containing protein MJ1345 (314 aa).

TPR repeat units follow at residues 12–45 (ESIL…RESP), 46–78 (DVYV…KPKY), 80–112 (LANF…EKSD), 114–146 (PVKY…YPKS), 147–180 (AIAW…NPKD), 182–214 (QSLL…NNKD), 215–248 (IRAL…NPDD), 249–282 (PLLY…NPNI), and 284–313 (DAWN…LDIY).

This Methanocaldococcus jannaschii (strain ATCC 43067 / DSM 2661 / JAL-1 / JCM 10045 / NBRC 100440) (Methanococcus jannaschii) protein is TPR repeat-containing protein MJ1345.